We begin with the raw amino-acid sequence, 397 residues long: Probable peptidoglycan glycosyltransferase FtsW (397 aa).

At 1–18 the chain is on the cytoplasmic side; the sequence is MSALTLTASKNTQTMTLD. The helical transmembrane segment at 19–39 threads the bilayer; it reads LPLLGSALALAAIGLIMVTSA. Topologically, residues 40 to 58 are periplasmic; the sequence is SVDFADDANGQALYYMWRH. Residues 59–79 form a helical membrane-spanning segment; that stretch reads LTYLLAGVAVGFVILRLPLEW. The Cytoplasmic portion of the chain corresponds to 80–83; that stretch reads WHKQ. The helical transmembrane segment at 84 to 104 threads the bilayer; sequence SWLLLVVALGFLVAVLIPGIG. The Periplasmic segment spans residues 105–112; it reads RTVNGSTR. The helical transmembrane segment at 113–133 threads the bilayer; the sequence is WISLGVINIQASEIAKVCLAI. At 134–148 the chain is on the cytoplasmic side; the sequence is YTASYLVRRLDEVRG. Residues 149 to 169 traverse the membrane as a helical segment; sequence SWWGFAKPLLVLMLVALLLLM. The Periplasmic segment spans residues 170–172; the sequence is EPD. The helical transmembrane segment at 173–193 threads the bilayer; it reads FGALVVTMCAVVGMIFLSGVA. The Cytoplasmic portion of the chain corresponds to 194 to 196; it reads LSR. Residues 197–217 traverse the membrane as a helical segment; sequence FAALLMFCVGSVALLAVSQPY. At 218-272 the chain is on the periplasmic side; the sequence is RLKRLTAYTDPWADQFDSGYQLTQALIAFGRGEWSGVGLGNSVQKLFYLPEAHTD. A helical membrane pass occupies residues 273 to 293; that stretch reads FVFAIIAEELGLLGSLLIIVL. The Cytoplasmic segment spans residues 294-316; that stretch reads FGVLLWRGMYVSRVAERAGQLFN. The chain crosses the membrane as a helical span at residues 317-337; sequence AYAGYGVTLLLGGQALINLGV. Residues 338–348 are Periplasmic-facing; sequence NTGLLPTKGLT. The chain crosses the membrane as a helical span at residues 349-369; it reads LPLISYGGSSLIISCLCVAIL. The Cytoplasmic segment spans residues 370-397; sequence LRIGSEAVSGEQTEDESPKVKNRGGAQR.

This sequence belongs to the SEDS family. FtsW subfamily.

The protein resides in the cell inner membrane. The catalysed reaction is [GlcNAc-(1-&gt;4)-Mur2Ac(oyl-L-Ala-gamma-D-Glu-L-Lys-D-Ala-D-Ala)](n)-di-trans,octa-cis-undecaprenyl diphosphate + beta-D-GlcNAc-(1-&gt;4)-Mur2Ac(oyl-L-Ala-gamma-D-Glu-L-Lys-D-Ala-D-Ala)-di-trans,octa-cis-undecaprenyl diphosphate = [GlcNAc-(1-&gt;4)-Mur2Ac(oyl-L-Ala-gamma-D-Glu-L-Lys-D-Ala-D-Ala)](n+1)-di-trans,octa-cis-undecaprenyl diphosphate + di-trans,octa-cis-undecaprenyl diphosphate + H(+). It participates in cell wall biogenesis; peptidoglycan biosynthesis. In terms of biological role, peptidoglycan polymerase that is essential for cell division. The protein is Probable peptidoglycan glycosyltransferase FtsW of Hahella chejuensis (strain KCTC 2396).